A 172-amino-acid polypeptide reads, in one-letter code: RNA pyrophosphohydrolase (172 aa).

One can recognise a Nudix hydrolase domain in the interval 6–149; it reads GYRPNVGIIL…KRDVYRMALK (144 aa). Residues 38–59 carry the Nudix box motif; sequence GGIKYGESPEQAMYRELMEEVG.

It belongs to the Nudix hydrolase family. RppH subfamily. It depends on a divalent metal cation as a cofactor.

Accelerates the degradation of transcripts by removing pyrophosphate from the 5'-end of triphosphorylated RNA, leading to a more labile monophosphorylated state that can stimulate subsequent ribonuclease cleavage. This Methylobacillus flagellatus (strain ATCC 51484 / DSM 6875 / VKM B-1610 / KT) protein is RNA pyrophosphohydrolase.